We begin with the raw amino-acid sequence, 394 residues long: Probable tRNA sulfurtransferase (394 aa).

The THUMP domain maps to 61 to 168; that stretch reads DETVATLSRI…PMINIYSEEI (108 aa). ATP is bound by residues 185–186, 210–211, Arg-267, Gly-289, and Gln-298; these read LL and YF.

This sequence belongs to the ThiI family.

It is found in the cytoplasm. The catalysed reaction is [ThiI sulfur-carrier protein]-S-sulfanyl-L-cysteine + a uridine in tRNA + 2 reduced [2Fe-2S]-[ferredoxin] + ATP + H(+) = [ThiI sulfur-carrier protein]-L-cysteine + a 4-thiouridine in tRNA + 2 oxidized [2Fe-2S]-[ferredoxin] + AMP + diphosphate. The enzyme catalyses [ThiS sulfur-carrier protein]-C-terminal Gly-Gly-AMP + S-sulfanyl-L-cysteinyl-[cysteine desulfurase] + AH2 = [ThiS sulfur-carrier protein]-C-terminal-Gly-aminoethanethioate + L-cysteinyl-[cysteine desulfurase] + A + AMP + 2 H(+). It functions in the pathway cofactor biosynthesis; thiamine diphosphate biosynthesis. Functionally, catalyzes the ATP-dependent transfer of a sulfur to tRNA to produce 4-thiouridine in position 8 of tRNAs, which functions as a near-UV photosensor. Also catalyzes the transfer of sulfur to the sulfur carrier protein ThiS, forming ThiS-thiocarboxylate. This is a step in the synthesis of thiazole, in the thiamine biosynthesis pathway. The sulfur is donated as persulfide by IscS. This is Probable tRNA sulfurtransferase from Agathobacter rectalis (strain ATCC 33656 / DSM 3377 / JCM 17463 / KCTC 5835 / VPI 0990) (Eubacterium rectale).